We begin with the raw amino-acid sequence, 426 residues long: Glutamate-1-semialdehyde 2,1-aminomutase (426 aa).

Lysine 265 carries the N6-(pyridoxal phosphate)lysine modification.

The protein belongs to the class-III pyridoxal-phosphate-dependent aminotransferase family. HemL subfamily. Homodimer. Pyridoxal 5'-phosphate serves as cofactor.

Its subcellular location is the cytoplasm. It carries out the reaction (S)-4-amino-5-oxopentanoate = 5-aminolevulinate. It functions in the pathway porphyrin-containing compound metabolism; protoporphyrin-IX biosynthesis; 5-aminolevulinate from L-glutamyl-tRNA(Glu): step 2/2. This chain is Glutamate-1-semialdehyde 2,1-aminomutase, found in Klebsiella pneumoniae (strain 342).